The primary structure comprises 281 residues: Sulfur carrier protein FdhD (281 aa).

The Cysteine persulfide intermediate role is filled by Cys-117.

The protein belongs to the FdhD family.

It is found in the cytoplasm. Functionally, required for formate dehydrogenase (FDH) activity. Acts as a sulfur carrier protein that transfers sulfur from IscS to the molybdenum cofactor prior to its insertion into FDH. The protein is Sulfur carrier protein FdhD of Xanthomonas euvesicatoria pv. vesicatoria (strain 85-10) (Xanthomonas campestris pv. vesicatoria).